Reading from the N-terminus, the 363-residue chain is NAD(P)H-quinone oxidoreductase subunit 1, chloroplastic (363 aa).

The next 7 membrane-spanning stretches (helical) occupy residues 28 to 48 (WVLA…LVIV), 98 to 118 (FSIG…VIPF), 129 to 149 (IGIF…LMSG), 253 to 273 (FGLF…FVTV), 274 to 294 (LYLG…LVEI), 300 to 320 (IFGT…FLFI), and 336 to 356 (LLNL…LLTT).

Belongs to the complex I subunit 1 family. In terms of assembly, NDH is composed of at least 16 different subunits, 5 of which are encoded in the nucleus.

The protein resides in the plastid. It is found in the chloroplast thylakoid membrane. The catalysed reaction is a plastoquinone + NADH + (n+1) H(+)(in) = a plastoquinol + NAD(+) + n H(+)(out). The enzyme catalyses a plastoquinone + NADPH + (n+1) H(+)(in) = a plastoquinol + NADP(+) + n H(+)(out). In terms of biological role, NDH shuttles electrons from NAD(P)H:plastoquinone, via FMN and iron-sulfur (Fe-S) centers, to quinones in the photosynthetic chain and possibly in a chloroplast respiratory chain. The immediate electron acceptor for the enzyme in this species is believed to be plastoquinone. Couples the redox reaction to proton translocation, and thus conserves the redox energy in a proton gradient. The sequence is that of NAD(P)H-quinone oxidoreductase subunit 1, chloroplastic from Citrus sinensis (Sweet orange).